A 222-amino-acid chain; its full sequence is 6,7-dimethyl-8-ribityllumazine synthase, chloroplastic (222 aa).

The transit peptide at 1–66 directs the protein to the chloroplast; sequence MASFAASQTC…NRASFVVTNA (66 aa). 5-amino-6-(D-ribitylamino)uracil contacts are provided by residues Phe-89, 122–124, and 146–148; these read AYE and AVV. 151-152 lines the (2S)-2-hydroxy-3-oxobutyl phosphate pocket; the sequence is DT. The active-site Proton donor is the His-154. Residue Phe-179 coordinates 5-amino-6-(D-ribitylamino)uracil. Arg-193 provides a ligand contact to (2S)-2-hydroxy-3-oxobutyl phosphate.

The protein belongs to the DMRL synthase family. In terms of assembly, oligomer forming an icosahedral capsid.

It is found in the plastid. The protein resides in the chloroplast. It carries out the reaction (2S)-2-hydroxy-3-oxobutyl phosphate + 5-amino-6-(D-ribitylamino)uracil = 6,7-dimethyl-8-(1-D-ribityl)lumazine + phosphate + 2 H2O + H(+). It participates in cofactor biosynthesis; riboflavin biosynthesis; riboflavin from 2-hydroxy-3-oxobutyl phosphate and 5-amino-6-(D-ribitylamino)uracil: step 1/2. Its function is as follows. Catalyzes the formation of 6,7-dimethyl-8-ribityllumazine by condensation of 5-amino-6-(D-ribitylamino)uracil with 3,4-dihydroxy-2-butanone 4-phosphate. This is the penultimate step in the biosynthesis of riboflavin. This Spinacia oleracea (Spinach) protein is 6,7-dimethyl-8-ribityllumazine synthase, chloroplastic.